A 467-amino-acid polypeptide reads, in one-letter code: MAREAAEKTATSTSLAALAGLVERYANPDFAIAPGGHVQTISPGHYTVSGLSRHVRLGDFVAHKSTTGTHLGEVVRVEPERVVVCPIEPGDPIGIHDVVIRKGAFRIAPTDNWCGRTINALAEPIDGLGALLQGDIRRSIANTAPPSMTRKRVEQGFRTGVRAIDIFSPLCLGQRLGIFAGSGVGKSTLLSMLARADAFDKVVIALVGERGREVREFIEDTLGDNLSKSVAVVATSDESPMLRKMAPLTAVTIAEHYRDKGDNVLLIVDSVTRFAHAIREVATAAGEPPIARGYPASVFTELPRLLERAGPGAEGAGTITAIISILVDGDNHNDPVADSARGILDGHIVLDRSLAEEGRYPPVNPLASISRLARKAWTPDQEKLVARLKSLIHRFEETRDLRLIGGYRPGGDADLDMAIKQVPVIYDVLKQMPGERPAFDAFTDLANALKAAAMGNQPGAAGLRGRG.

180–187 (AGSGVGKS) lines the ATP pocket.

Belongs to the ATPase alpha/beta chains family.

Its subcellular location is the cytoplasm. It catalyses the reaction ATP + H2O + 4 H(+)(in) = ADP + phosphate + 5 H(+)(out). In terms of biological role, probable catalytic subunit of a protein translocase for flagellum-specific export, or a proton translocase involved in local circuits at the flagellum. This is Flagellum-specific ATP synthase (fliI) from Rhizobium meliloti (strain 1021) (Ensifer meliloti).